Consider the following 570-residue polypeptide: MKLRYIINENKLVFTSCNMRDKIITGKKIIFSQSVAKDQTKNLSSFLSERFYSVNQSHNHSIIIGSSLSHQENDIEHDTILDTSGVLVTTDTNGIVNGARVAITDGLGGGNGDQEEDDEIYRVSHSSCENFLNCDQNIDTTLSLITQPKASDKKQTAPKTLQHTEASMAAFIYQNHPGKGYIGEFANIGDGLIIILDKRFKIKHMVSACHIYRGFGTWTPPSLQALATTANKDALLVRQTLKLAEGDIIISMTDGVWGELKTSLIAQTNDRRDIGVDKEYFKTLFDELTDAPYPSSFDIARIITQRAMSRSLERRKTLIKLINEIEQQHFHEKSVKTINEVLEYFIKTGHVETAQTLKAILFEDGLSDGITYFENIEIPLEMVMHDLKSRTVGDCSTINVTRIPYHLDELIRGFINYPEKHQILAPLFKARVKSEADLEEAFHRLSLEMVQPEIECPISETHFERAFKKETLDKTQAVLTHYFRISTGLDSKKNYQERLNDLSAYLSKESSLEKNDIKLLLSMLDSEIKPKTGVFQTLFGENQNKLYKAFHKKIELQLLDSEIENKNELK.

It localises to the secreted. It is found in the host cytoplasm. It catalyses the reaction [Rab1 protein]-O-phosphocholine-L-serine + H2O = [Rab1 protein]-L-serine + phosphocholine + H(+). In terms of biological role, virulence effector that plays a role in hijacking the host vesicular trafficking by recruiting the small guanosine triphosphatase (GTPase) Rab1 to the cytosolic face of the Legionella-containing vacuole (LCVs). Acts as a phosphocholine hydrolase by mediating the hydrolysis of phosphocholine to Ser residues of host RAB1 (RAB1A, RAB1B or RAB1C). Dephosphocholination of target proteins restores accessibility to GTPase effector LepB. Can act on both GDP-bound and GTP-bound Rab proteins. The polypeptide is Phosphocholine hydrolase Lem3 (lem3) (Legionella pneumophila subsp. pneumophila (strain Philadelphia 1 / ATCC 33152 / DSM 7513)).